The sequence spans 173 residues: Cyclic pyranopterin monophosphate synthase (173 aa).

Residues 75 to 77 (MCH) and 117 to 118 (ME) contribute to the substrate site. D132 is an active-site residue. Residues 152-173 (SGGKSGHYQRENSSVGGFANEQ) are disordered. A compositionally biased stretch (polar residues) spans 162-173 (ENSSVGGFANEQ).

This sequence belongs to the MoaC family. Homohexamer; trimer of dimers.

It carries out the reaction (8S)-3',8-cyclo-7,8-dihydroguanosine 5'-triphosphate = cyclic pyranopterin phosphate + diphosphate. The protein operates within cofactor biosynthesis; molybdopterin biosynthesis. Its function is as follows. Catalyzes the conversion of (8S)-3',8-cyclo-7,8-dihydroguanosine 5'-triphosphate to cyclic pyranopterin monophosphate (cPMP). This is Cyclic pyranopterin monophosphate synthase from Geobacillus sp. (strain WCH70).